The sequence spans 197 residues: Lipoprotein signal peptidase (197 aa).

The next 2 helical transmembrane spans lie at S73–I93 and T97–D117. Catalysis depends on residues D126 and D144. The chain crosses the membrane as a helical span at residues Y135–I155.

The protein belongs to the peptidase A8 family.

It is found in the cell inner membrane. It catalyses the reaction Release of signal peptides from bacterial membrane prolipoproteins. Hydrolyzes -Xaa-Yaa-Zaa-|-(S,diacylglyceryl)Cys-, in which Xaa is hydrophobic (preferably Leu), and Yaa (Ala or Ser) and Zaa (Gly or Ala) have small, neutral side chains.. Its pathway is protein modification; lipoprotein biosynthesis (signal peptide cleavage). This protein specifically catalyzes the removal of signal peptides from prolipoproteins. This is Lipoprotein signal peptidase from Rickettsia felis (strain ATCC VR-1525 / URRWXCal2) (Rickettsia azadi).